Here is a 136-residue protein sequence, read N- to C-terminus: Glutamyl-tRNA(Gln) amidotransferase subunit C, mitochondrial (136 aa).

Residues 1–27 (MWARAVHLGLRAAARGRRGFTSKADPQ) constitute a mitochondrion transit peptide.

It belongs to the GatC family. As to quaternary structure, subunit of the heterotrimeric GatCAB amidotransferase (AdT) complex, composed of A (QRSL1), B (GATB) and C (GATC) subunits.

It localises to the mitochondrion. The catalysed reaction is L-glutamyl-tRNA(Gln) + L-glutamine + ATP + H2O = L-glutaminyl-tRNA(Gln) + L-glutamate + ADP + phosphate + H(+). Allows the formation of correctly charged Gln-tRNA(Gln) through the transamidation of misacylated Glu-tRNA(Gln) in the mitochondria. The reaction takes place in the presence of glutamine and ATP through an activated gamma-phospho-Glu-tRNA(Gln). This chain is Glutamyl-tRNA(Gln) amidotransferase subunit C, mitochondrial, found in Bos taurus (Bovine).